Consider the following 852-residue polypeptide: Pentatricopeptide repeat-containing protein At5g02830, chloroplastic (852 aa).

The N-terminal 25 residues, 1–25, are a transit peptide targeting the chloroplast; the sequence is MRDFVIVFGSSSAITNPHHHHRRCY. The interval 17-60 is disordered; it reads PHHHHRRCYATAPESNRKTKSNSSFTKLLPSLPQQHSPSPASVS. The span at 44–58 shows a compositional bias: low complexity; sequence LLPSLPQQHSPSPAS. PPR repeat units lie at residues 334–364, 373–407, 408–442, 443–477, 525–557, 558–592, 593–627, and 628–665; these read DMTS…AKRM, DAFT…GVTP, NTHT…GCEP, NSQC…SVNE, TTAT…GLSP, NQIT…GTRP, DVVA…QIKP, and NWVT…GYKP.

It belongs to the PPR family. P subfamily.

It is found in the plastid. The protein resides in the chloroplast. In Arabidopsis thaliana (Mouse-ear cress), this protein is Pentatricopeptide repeat-containing protein At5g02830, chloroplastic.